A 324-amino-acid polypeptide reads, in one-letter code: Protein ChrB (324 aa).

Together with ChrA1, this protein reduces chromate accumulation and is essential for chromate resistance, possibly as a regulatory protein. This Cupriavidus metallidurans (strain ATCC 43123 / DSM 2839 / NBRC 102507 / CH34) (Ralstonia metallidurans) protein is Protein ChrB.